A 235-amino-acid polypeptide reads, in one-letter code: Cytidylate kinase (235 aa).

Position 11 to 19 (11 to 19 (GPSGVGKST)) interacts with ATP.

Belongs to the cytidylate kinase family. Type 1 subfamily.

The protein resides in the cytoplasm. It carries out the reaction CMP + ATP = CDP + ADP. It catalyses the reaction dCMP + ATP = dCDP + ADP. The polypeptide is Cytidylate kinase (Syntrophotalea carbinolica (strain DSM 2380 / NBRC 103641 / GraBd1) (Pelobacter carbinolicus)).